Here is a 60-residue protein sequence, read N- to C-terminus: Truncated protein A35 homolog (60 aa).

This sequence belongs to the chordopoxvirinae A35 protein family.

The protein is Truncated protein A35 homolog (A38R) of Variola virus (isolate Human/India/Ind3/1967) (VARV).